The following is a 151-amino-acid chain: Transcriptional regulator MraZ (151 aa).

SpoVT-AbrB domains are found at residues 5–52 (ANAV…PLDE) and 81–124 (AVDL…DEDA).

Belongs to the MraZ family. As to quaternary structure, forms oligomers.

It localises to the cytoplasm. It is found in the nucleoid. This chain is Transcriptional regulator MraZ, found in Pseudomonas putida (strain W619).